Consider the following 1583-residue polypeptide: Pentafunctional AROM polypeptide (1583 aa).

The tract at residues 1–384 is 3-dehydroquinate synthase; it reads MSNPTKISIL…YETRASVVAN (384 aa). NAD(+) is bound by residues 44-46, 81-84, 114-116, and aspartate 119; these read DTN, EVSK, and GGV. Arginine 130 contributes to the 7-phospho-2-dehydro-3-deoxy-D-arabino-heptonate binding site. 139 to 140 contributes to the NAD(+) binding site; the sequence is TT. 7-phospho-2-dehydro-3-deoxy-D-arabino-heptonate-binding residues include aspartate 146 and lysine 152. Lysine 161 contacts NAD(+). Residue asparagine 162 participates in 7-phospho-2-dehydro-3-deoxy-D-arabino-heptonate binding. NAD(+) contacts are provided by residues 179 to 182 and asparagine 190; that span reads FLET. Residue glutamate 194 coordinates Zn(2+). 7-phospho-2-dehydro-3-deoxy-D-arabino-heptonate is bound by residues 194–197 and lysine 250; that span reads EVIK. The active-site Proton acceptor; for 3-dehydroquinate synthase activity is the glutamate 260. Residues 264–268 and histidine 271 contribute to the 7-phospho-2-dehydro-3-deoxy-D-arabino-heptonate site; that span reads RNLLN. Histidine 271 serves as a coordination point for Zn(2+). Catalysis depends on histidine 275, which acts as the Proton acceptor; for 3-dehydroquinate synthase activity. 2 residues coordinate 7-phospho-2-dehydro-3-deoxy-D-arabino-heptonate: histidine 287 and lysine 356. Histidine 287 contributes to the Zn(2+) binding site. Positions 397-842 are EPSP synthase; the sequence is VHPGVAQSSN…WDTLRQLFKV (446 aa). Cysteine 824 serves as the catalytic For EPSP synthase activity. The segment at 863-1055 is shikimate kinase; the sequence is NASIYIIGMR…KEKEHSFFAS (193 aa). ATP is bound at residue 870–877; it reads GMRGAGKS. A 3-dehydroquinase region spans residues 1056–1276; the sequence is LTLPDLREAG…AAPGQLSATE (221 aa). Catalysis depends on histidine 1179, which acts as the Proton acceptor; for 3-dehydroquinate dehydratase activity. Lysine 1207 functions as the Schiff-base intermediate with substrate; for 3-dehydroquinate dehydratase activity in the catalytic mechanism. The segment at 1289–1583 is shikimate dehydrogenase; the sequence is PKKFAIFGSP…SARACSSPLI (295 aa).

The protein in the N-terminal section; belongs to the sugar phosphate cyclases superfamily. Dehydroquinate synthase family. In the 2nd section; belongs to the EPSP synthase family. This sequence in the 3rd section; belongs to the shikimate kinase family. It in the 4th section; belongs to the type-I 3-dehydroquinase family. The protein in the C-terminal section; belongs to the shikimate dehydrogenase family. In terms of assembly, homodimer. The cofactor is Zn(2+).

It localises to the cytoplasm. It carries out the reaction 7-phospho-2-dehydro-3-deoxy-D-arabino-heptonate = 3-dehydroquinate + phosphate. The catalysed reaction is 3-dehydroquinate = 3-dehydroshikimate + H2O. It catalyses the reaction shikimate + NADP(+) = 3-dehydroshikimate + NADPH + H(+). The enzyme catalyses shikimate + ATP = 3-phosphoshikimate + ADP + H(+). It carries out the reaction 3-phosphoshikimate + phosphoenolpyruvate = 5-O-(1-carboxyvinyl)-3-phosphoshikimate + phosphate. The protein operates within metabolic intermediate biosynthesis; chorismate biosynthesis; chorismate from D-erythrose 4-phosphate and phosphoenolpyruvate: step 2/7. It participates in metabolic intermediate biosynthesis; chorismate biosynthesis; chorismate from D-erythrose 4-phosphate and phosphoenolpyruvate: step 3/7. It functions in the pathway metabolic intermediate biosynthesis; chorismate biosynthesis; chorismate from D-erythrose 4-phosphate and phosphoenolpyruvate: step 4/7. Its pathway is metabolic intermediate biosynthesis; chorismate biosynthesis; chorismate from D-erythrose 4-phosphate and phosphoenolpyruvate: step 5/7. The protein operates within metabolic intermediate biosynthesis; chorismate biosynthesis; chorismate from D-erythrose 4-phosphate and phosphoenolpyruvate: step 6/7. In terms of biological role, the AROM polypeptide catalyzes 5 consecutive enzymatic reactions in prechorismate polyaromatic amino acid biosynthesis. The sequence is that of Pentafunctional AROM polypeptide (aromA) from Emericella nidulans (strain FGSC A4 / ATCC 38163 / CBS 112.46 / NRRL 194 / M139) (Aspergillus nidulans).